Reading from the N-terminus, the 54-residue chain is Photoreceptor disk component PRCD (54 aa).

A lipid anchor (S-palmitoyl cysteine) is attached at cysteine 2. Positions 24-54 (QPEPSGADGAVVGSRSERDLQSSGRKEEPLK) are disordered. Residues 38 to 54 (RSERDLQSSGRKEEPLK) show a composition bias toward basic and acidic residues.

Belongs to the PRCD family. In terms of assembly, interacts with RHO/rhodopsin; the interaction promotes PRCD stability. Palmitoylated at Cys-2. Palmitoylation is essential for protein stability and trafficking to the photoreceptor outer segment, but does not appear to be essential for membrane localization. Probably palmitoylated by ZDHHC3. In terms of processing, phosphorylated. As to expression, expressed in retina.

Its subcellular location is the cell projection. The protein localises to the cilium. It localises to the photoreceptor outer segment. The protein resides in the membrane. It is found in the endoplasmic reticulum. Its subcellular location is the golgi apparatus. Its function is as follows. Involved in vision. The sequence is that of Photoreceptor disk component PRCD from Canis lupus familiaris (Dog).